The chain runs to 91 residues: Small ribosomal subunit protein uS19 (91 aa).

This sequence belongs to the universal ribosomal protein uS19 family.

Its function is as follows. Protein S19 forms a complex with S13 that binds strongly to the 16S ribosomal RNA. The chain is Small ribosomal subunit protein uS19 from Synechococcus elongatus (strain ATCC 33912 / PCC 7942 / FACHB-805) (Anacystis nidulans R2).